The following is a 63-amino-acid chain: Large ribosomal subunit protein uL29 (63 aa).

The protein belongs to the universal ribosomal protein uL29 family.

This Herminiimonas arsenicoxydans protein is Large ribosomal subunit protein uL29.